The primary structure comprises 53 residues: Unknown protein from 2D-PAGE of needles (53 aa).

This Pinus pinaster (Maritime pine) protein is Unknown protein from 2D-PAGE of needles.